Here is a 137-residue protein sequence, read N- to C-terminus: Peptide methionine sulfoxide reductase MsrB (137 aa).

One can recognise a MsrB domain in the interval 7 to 129; the sequence is AEELKKNLSD…NSASLRFTDG (123 aa). Zn(2+)-binding residues include Cys-46, Cys-49, Cys-95, and Cys-98. The Nucleophile role is filled by Cys-118.

The protein belongs to the MsrB Met sulfoxide reductase family. The cofactor is Zn(2+).

The enzyme catalyses L-methionyl-[protein] + [thioredoxin]-disulfide + H2O = L-methionyl-(R)-S-oxide-[protein] + [thioredoxin]-dithiol. The polypeptide is Peptide methionine sulfoxide reductase MsrB (Shigella dysenteriae serotype 1 (strain Sd197)).